A 409-amino-acid chain; its full sequence is Nucleoprotein (409 aa).

4 disordered regions span residues 1–32 (MASG…SSGN), 46–84 (SPQP…KGRR), 121–194 (ADVK…GSED), and 238–259 (VDQV…DKMN). Residues 29–160 (SSGNASWFQA…GNFRWDFIPL (132 aa)) are RNA-binding. The 126-residue stretch at 31–156 (GNASWFQAIK…GGPDGNFRWD (126 aa)) folds into the CoV N NTD domain. The span at 70 to 84 (YWRRQARFKPGKGRR) shows a compositional bias: basic residues. A compositionally biased stretch (low complexity) spans 162–179 (RGRSGRSTAASSAASSRP). 2 stretches are compositionally biased toward basic and acidic residues: residues 180 to 192 (PSRE…RSGS) and 247 to 259 (KGKE…DKMN). Phosphoserine; by host occurs at positions 190 and 192. Residues 215-331 (TKAKADEMAH…QCVDGVGTRP (117 aa)) enclose the CoV N CTD domain. The dimerization stretch occupies residues 226-333 (RYCKRTIPPG…VDGVGTRPKD (108 aa)). Cys-320 and Cys-323 are joined by a disulfide. The segment at 326 to 409 (GVGTRPKDDE…GDSALGENEL (84 aa)) is disordered. A compositionally biased stretch (low complexity) spans 341–356 (RSSSRPATRTSSPAPR). Residues 358–367 (QRLKKEKRPK) are compositionally biased toward basic residues. Over residues 368 to 384 (KQDDEVDKALTSDEERN) the composition is skewed to basic and acidic residues. Phosphothreonine; by host is present on Thr-378. At Ser-379 the chain carries Phosphoserine; by host.

Belongs to the gammacoronavirus nucleocapsid protein family. In terms of assembly, homooligomer. Both monomeric and oligomeric forms interact with RNA. Interacts with protein M. Interacts with NSP3; this interaction serves to tether the genome to the newly translated replicase-transcriptase complex at a very early stage of infection. Post-translationally, ADP-ribosylated. The ADP-ribosylation is retained in the virion during infection. In terms of processing, phosphorylated on serine and threonine residues.

The protein resides in the virion. The protein localises to the host endoplasmic reticulum-Golgi intermediate compartment. Its subcellular location is the host Golgi apparatus. In terms of biological role, packages the positive strand viral genome RNA into a helical ribonucleocapsid (RNP) and plays a fundamental role during virion assembly through its interactions with the viral genome and membrane protein M. Plays an important role in enhancing the efficiency of subgenomic viral RNA transcription as well as viral replication. The protein is Nucleoprotein of Avian infectious bronchitis virus (strain Gray) (IBV).